The following is a 951-amino-acid chain: Valine--tRNA ligase (951 aa).

The 'HIGH' region motif lies at Pro40–His50. The 'KMSKS' region signature appears at Lys551–Ser555. Residue Lys554 coordinates ATP. Residues Met879–Ser950 are a coiled coil.

Belongs to the class-I aminoacyl-tRNA synthetase family. ValS type 1 subfamily. In terms of assembly, monomer.

The protein resides in the cytoplasm. The catalysed reaction is tRNA(Val) + L-valine + ATP = L-valyl-tRNA(Val) + AMP + diphosphate. Catalyzes the attachment of valine to tRNA(Val). As ValRS can inadvertently accommodate and process structurally similar amino acids such as threonine, to avoid such errors, it has a 'posttransfer' editing activity that hydrolyzes mischarged Thr-tRNA(Val) in a tRNA-dependent manner. The protein is Valine--tRNA ligase of Pseudoalteromonas translucida (strain TAC 125).